A 385-amino-acid chain; its full sequence is V-type proton ATPase subunit C (385 aa).

It belongs to the V-ATPase C subunit family. V-ATPase is a heteromultimeric enzyme made up of two complexes: the ATP-hydrolytic V1 complex and the proton translocation V0 complex. The V1 complex consists of three catalytic AB heterodimers that form a heterohexamer, three peripheral stalks each consisting of EG heterodimers, one central rotor including subunits D and F, and the regulatory subunits C and H. The proton translocation complex V0 consists of the proton transport subunit a, a ring of proteolipid subunits c9c'', rotary subunit d, subunits e and f, and the accessory subunits vah-19/Ac45 and vah-20/PRR. Interacts with V-type proton ATPase subunits a1 unc-32, a2 vha-5 and a3 vha-6.

It is found in the cytoplasm. The protein resides in the membrane. Its function is as follows. Subunit of the V1 complex of vacuolar(H+)-ATPase (V-ATPase), a multisubunit enzyme composed of a peripheral complex (V1) that hydrolyzes ATP and a membrane integral complex (V0) that translocates protons. V-ATPase is responsible for acidifying and maintaining the pH of intracellular compartments and in some cell types, is targeted to the plasma membrane, where it is responsible for acidifying the extracellular environment. Subunit C is necessary for the assembly of the catalytic sector of the enzyme and is likely to have a specific function in its catalytic activity. Has roles in embryogenesis and ovulation. The sequence is that of V-type proton ATPase subunit C from Caenorhabditis briggsae.